The sequence spans 232 residues: Ubiquinone biosynthesis O-methyltransferase (232 aa).

S-adenosyl-L-methionine is bound by residues arginine 36, glycine 55, aspartate 76, and methionine 120.

The protein belongs to the methyltransferase superfamily. UbiG/COQ3 family.

It catalyses the reaction a 3-demethylubiquinol + S-adenosyl-L-methionine = a ubiquinol + S-adenosyl-L-homocysteine + H(+). The catalysed reaction is a 3-(all-trans-polyprenyl)benzene-1,2-diol + S-adenosyl-L-methionine = a 2-methoxy-6-(all-trans-polyprenyl)phenol + S-adenosyl-L-homocysteine + H(+). It functions in the pathway cofactor biosynthesis; ubiquinone biosynthesis. In terms of biological role, O-methyltransferase that catalyzes the 2 O-methylation steps in the ubiquinone biosynthetic pathway. The sequence is that of Ubiquinone biosynthesis O-methyltransferase from Burkholderia lata (strain ATCC 17760 / DSM 23089 / LMG 22485 / NCIMB 9086 / R18194 / 383).